The chain runs to 368 residues: Flagellar P-ring protein (368 aa).

The signal sequence occupies residues 1–22 (MLIPLARAVLALALLGAGAAHA).

This sequence belongs to the FlgI family. In terms of assembly, the basal body constitutes a major portion of the flagellar organelle and consists of four rings (L,P,S, and M) mounted on a central rod.

It is found in the periplasm. The protein localises to the bacterial flagellum basal body. In terms of biological role, assembles around the rod to form the L-ring and probably protects the motor/basal body from shearing forces during rotation. The protein is Flagellar P-ring protein of Bordetella bronchiseptica (strain ATCC BAA-588 / NCTC 13252 / RB50) (Alcaligenes bronchisepticus).